The following is a 118-amino-acid chain: Large ribosomal subunit protein bL20 (118 aa).

Belongs to the bacterial ribosomal protein bL20 family.

Functionally, binds directly to 23S ribosomal RNA and is necessary for the in vitro assembly process of the 50S ribosomal subunit. It is not involved in the protein synthesizing functions of that subunit. This Pelagibacter ubique (strain HTCC1062) protein is Large ribosomal subunit protein bL20.